The sequence spans 333 residues: Ketol-acid reductoisomerase (NADP(+)) (333 aa).

A KARI N-terminal Rossmann domain is found at 2 to 182; the sequence is AKMYYDSDAS…GCTRAGVLET (181 aa). NADP(+)-binding positions include 25-28, arginine 48, serine 51, and 83-86; these read YGSQ and DERQ. The active site involves histidine 108. An NADP(+)-binding site is contributed by glycine 134. The 146-residue stretch at 183-328 folds into the KARI C-terminal knotted domain; that stretch reads TFKEETETDL…AELRAMMPFI (146 aa). Mg(2+) contacts are provided by aspartate 191, glutamate 195, glutamate 227, and glutamate 231. Serine 252 serves as a coordination point for substrate.

It belongs to the ketol-acid reductoisomerase family. Requires Mg(2+) as cofactor.

It catalyses the reaction (2R)-2,3-dihydroxy-3-methylbutanoate + NADP(+) = (2S)-2-acetolactate + NADPH + H(+). The catalysed reaction is (2R,3R)-2,3-dihydroxy-3-methylpentanoate + NADP(+) = (S)-2-ethyl-2-hydroxy-3-oxobutanoate + NADPH + H(+). The protein operates within amino-acid biosynthesis; L-isoleucine biosynthesis; L-isoleucine from 2-oxobutanoate: step 2/4. Its pathway is amino-acid biosynthesis; L-valine biosynthesis; L-valine from pyruvate: step 2/4. Functionally, involved in the biosynthesis of branched-chain amino acids (BCAA). Catalyzes an alkyl-migration followed by a ketol-acid reduction of (S)-2-acetolactate (S2AL) to yield (R)-2,3-dihydroxy-isovalerate. In the isomerase reaction, S2AL is rearranged via a Mg-dependent methyl migration to produce 3-hydroxy-3-methyl-2-ketobutyrate (HMKB). In the reductase reaction, this 2-ketoacid undergoes a metal-dependent reduction by NADPH to yield (R)-2,3-dihydroxy-isovalerate. The polypeptide is Ketol-acid reductoisomerase (NADP(+)) (Desulfitobacterium hafniense (strain DSM 10664 / DCB-2)).